A 479-amino-acid polypeptide reads, in one-letter code: Flotillin-like protein 3 (479 aa).

The S-palmitoyl cysteine moiety is linked to residue Cys36. Coiled-coil stretches lie at residues 227 to 251 and 306 to 326; these read KVKT…AALA and EYET…KQAE.

This sequence belongs to the band 7/mec-2 family. Flotillin subfamily. May be palmitoylated.

The protein localises to the cell membrane. It localises to the membrane. It is found in the caveola. May act as a scaffolding protein within caveolar membranes, functionally participating in formation of caveolae or caveolae-like vesicles. The protein is Flotillin-like protein 3 (FLOT3) of Arabidopsis thaliana (Mouse-ear cress).